The primary structure comprises 183 residues: Nodulation protein L (183 aa).

This sequence belongs to the transferase hexapeptide repeat family.

Acetyltransferase implicated in the O-acetylation of Nod factors. The chain is Nodulation protein L (nodL) from Rhizobium meliloti (strain 1021) (Ensifer meliloti).